A 662-amino-acid chain; its full sequence is Hypoxia-inducible factor 3-alpha (662 aa).

A disordered region spans residues 1–25; it reads MDWDQDRSNTELRKEKSRDAARSRR. A bHLH domain is found at 12–65; the sequence is LRKEKSRDAARSRRSQETEVLYQLAHTLPFARGVSAHLDKASIMRLTISYLRMH. Positions 75–98 are nuclear localization signal (isoform 2); that stretch reads QVEKGGEPLDACYLKALEGFVMVL. 2 consecutive PAS domains span residues 80-150 and 225-295; these read GEPL…PNLS and PHPA…LSKG. Residues 228–272 are nuclear export signal (isoform 2); the sequence is ASLEPPLGRGAFLSRHSLDMKFTYCDERIAEVAGYSPDDLIGCSA. Disordered stretches follow at residues 352–377 and 416–446; these read EQTEQHTRRPPRLSASSQKGIPGNSV and PILDGPPPAATPSTPQATRRPQSPLPADLPD. Residues 414–418 carry the LRRLL motif; the sequence is MAPIL. Residues 426–437 show a composition bias toward low complexity; the sequence is TPSTPQATRRPQ. An ODD region spans residues 448 to 581; that stretch reads LTVGLENAHR…SEDKGLELLE (134 aa). The NTAD stretch occupies residues 450-501; that stretch reads VGLENAHRLSTAQKNKTVETDLDIAQDPDTLDLEMLAPYISMDDDFQLNSSE. A Glycyl lysine isopeptide (Lys-Gly) (interchain with G-Cter in ubiquitin) cross-link involves residue Lys463. The LAPYISMD motif lies at 485–492; it reads LAPYISMD. At Pro487 the chain carries 4-hydroxyproline. A disordered region spans residues 500–595; the sequence is SEQLPKVHRR…KRSPRLEPGS (96 aa). Residues 505–521 are compositionally biased toward basic residues; sequence KVHRRPPRVARRPRARS. Residue Lys565 forms a Glycyl lysine isopeptide (Lys-Gly) (interchain with G-Cter in ubiquitin) linkage. The span at 572–584 shows a compositional bias: basic and acidic residues; sequence SEDKGLELLETKP.

As to quaternary structure, isoform 1 interacts with ARNT. Isoform 2 interacts with HIF1A. Isoform 2 interacts EPAS1. Isoform 2 interacts (via C-terminus domain) with BAD; the interaction reduces the binding between BAD and BAX. Isoform 2 (via C-terminus domain) interacts with BCL2L2 and MCL1. Interacts with VHL. Post-translationally, in normoxia, hydroxylated on Pro-487 in the oxygen-dependent degradation domain (ODD) by PHD. The hydroxylated proline promotes interaction with VHL, initiating rapid ubiquitination and subsequent proteasomal degradation. In terms of processing, ubiquitinated; ubiquitination occurs in a VHL- and oxygen-dependent pathway and subsequently targeted for proteasomal degradation. As to expression, isoform 3 is expressed in endothelial cells of vessels and capillaries in alveoli of the neonatal lung (at protein level). Expressed in lung, brain, heart and kidney. Isoform 2 is expressed in heart and lung. Isoform 2 is highly expressed in the epithelial cell layer of the cornea with lower expression in the layers of ganglion cells, inner nuclear cells, and rods and cones of the retina. Isoform 2 is expressed in the cerebellum only in the Purkinje cell layer.

Its subcellular location is the nucleus. It is found in the cytoplasm. It localises to the nucleus speckle. The protein resides in the mitochondrion. Functionally, acts as a transcriptional regulator in adaptive response to low oxygen tension. Acts as a regulator of hypoxia-inducible gene expression. Plays a role in the development of the cardiorespiratory system. In terms of biological role, acts as a positive regulator of hypoxia-inducible gene expression. Associates to core DNA sequence 5'-TACGTG-3' within the hypoxia response element (HRE) of target gene promoters in a ARNT-dependent manner, and hence also participates in the transcriptional activation of reporter genes driven by HRE. Attenuates the ability of transcription factor HIF1A, EPAS1 and the HIF1A-ARNT complex to bind to hypoxia-responsive elements (HRE) located within the enhancer/promoter of hypoxia-inducible target genes and hence inhibits HRE-driven transcriptional activation. Functions as an inhibitor of angiogenesis in hypoxic cells of the cornea. May act as a tumor suppressor. May also be involved in apoptosis. Its function is as follows. Attenuates the ability of transcription factor HIF1A, EPAS1 and the HIF1A-ARNT complex to bind to hypoxia-responsive elements (HRE) located within the enhancer/promoter of hypoxia-inducible target genes and hence inhibits HRE-driven transcriptional activation. Also plays a role in the development of the lung and heart during embryonic and neonatal stages. The polypeptide is Hypoxia-inducible factor 3-alpha (Mus musculus (Mouse)).